We begin with the raw amino-acid sequence, 395 residues long: S-adenosylmethionine synthase (395 aa).

ATP is bound at residue H15. D17 is a binding site for Mg(2+). K(+) is bound at residue E43. E56 and Q99 together coordinate L-methionine. The interval 99–109 is flexible loop; sequence QSPDIAMGVDE. ATP contacts are provided by residues 173-175, 239-240, D248, 254-255, A271, and K275; these read DGK, RF, and RK. D248 contributes to the L-methionine binding site. K279 is a binding site for L-methionine.

The protein belongs to the AdoMet synthase family. In terms of assembly, homotetramer; dimer of dimers. Requires Mg(2+) as cofactor. The cofactor is K(+).

The protein resides in the cytoplasm. The catalysed reaction is L-methionine + ATP + H2O = S-adenosyl-L-methionine + phosphate + diphosphate. It participates in amino-acid biosynthesis; S-adenosyl-L-methionine biosynthesis; S-adenosyl-L-methionine from L-methionine: step 1/1. Its function is as follows. Catalyzes the formation of S-adenosylmethionine (AdoMet) from methionine and ATP. The overall synthetic reaction is composed of two sequential steps, AdoMet formation and the subsequent tripolyphosphate hydrolysis which occurs prior to release of AdoMet from the enzyme. The sequence is that of S-adenosylmethionine synthase from Desulforudis audaxviator (strain MP104C).